The sequence spans 559 residues: Transcription activator of gluconeogenesis ERT1-2 (559 aa).

Positions 23 to 51 form a DNA-binding region, zn(2)-C6 fungal-type; that stretch reads CIHCQRTHLTCDNNRPCERCVARGFADTC. Disordered stretches follow at residues 63–159, 231–263, and 329–349; these read DDKE…TPSQ, SNSLLLGNNSQSPNTHSPHNQDQPTPQAATPSA, and AGQPQNTNGNGNGSEAPDSPS. Low complexity-rich tracts occupy residues 139 to 159 and 231 to 244; these read QGPQRQGAQQPQGGQSSTPSQ and SNSLLLGNNSQSPN. The segment covering 245 to 260 has biased composition (polar residues); sequence THSPHNQDQPTPQAAT. Residues 440-512 enclose the PAS domain; sequence ALLEYQKFIS…ELFSRIAFGD (73 aa).

Belongs to the ERT1/acuK family.

It is found in the nucleus. Its function is as follows. Transcription factor which regulates nonfermentable carbon utilization. Activator of gluconeogenetic genes. This Yarrowia lipolytica (strain CLIB 122 / E 150) (Yeast) protein is Transcription activator of gluconeogenesis ERT1-2 (ERT1-2).